The chain runs to 238 residues: Polynucleotide 3'-phosphatase (238 aa).

It belongs to the DNA 3' phosphatase family.

It localises to the nucleus. It catalyses the reaction a 3'end (2'-deoxyribonucleotide 3'-phosphate)-DNA + H2O = a 3'-end 2'-deoxyribonucleotide-DNA + phosphate. Its function is as follows. Dephosphorylate DNA's 3'-phosphate termini. Has a role in the repair of breaks in single-stranded DNA. This Saccharomyces cerevisiae (strain ATCC 204508 / S288c) (Baker's yeast) protein is Polynucleotide 3'-phosphatase (TPP1).